The sequence spans 599 residues: Elongation factor 4 (599 aa).

One can recognise a tr-type G domain in the interval 5–187; that stretch reads SHIRNFSIIA…RLVTAIPAPE (183 aa). Residues 17–22 and 134–137 contribute to the GTP site; these read DHGKST and NKMD.

This sequence belongs to the TRAFAC class translation factor GTPase superfamily. Classic translation factor GTPase family. LepA subfamily.

The protein localises to the cell inner membrane. It carries out the reaction GTP + H2O = GDP + phosphate + H(+). Its function is as follows. Required for accurate and efficient protein synthesis under certain stress conditions. May act as a fidelity factor of the translation reaction, by catalyzing a one-codon backward translocation of tRNAs on improperly translocated ribosomes. Back-translocation proceeds from a post-translocation (POST) complex to a pre-translocation (PRE) complex, thus giving elongation factor G a second chance to translocate the tRNAs correctly. Binds to ribosomes in a GTP-dependent manner. This is Elongation factor 4 from Pseudomonas aeruginosa (strain LESB58).